The chain runs to 276 residues: Ribosomal RNA small subunit methyltransferase A (276 aa).

S-adenosyl-L-methionine contacts are provided by asparagine 27, leucine 29, glycine 54, glutamate 75, aspartate 101, and asparagine 123.

This sequence belongs to the class I-like SAM-binding methyltransferase superfamily. rRNA adenine N(6)-methyltransferase family. RsmA subfamily.

It localises to the cytoplasm. The enzyme catalyses adenosine(1518)/adenosine(1519) in 16S rRNA + 4 S-adenosyl-L-methionine = N(6)-dimethyladenosine(1518)/N(6)-dimethyladenosine(1519) in 16S rRNA + 4 S-adenosyl-L-homocysteine + 4 H(+). In terms of biological role, specifically dimethylates two adjacent adenosines (A1518 and A1519) in the loop of a conserved hairpin near the 3'-end of 16S rRNA in the 30S particle. May play a critical role in biogenesis of 30S subunits. The protein is Ribosomal RNA small subunit methyltransferase A of Bartonella quintana (strain Toulouse) (Rochalimaea quintana).